The chain runs to 1011 residues: Vacuolar membrane protease (1011 aa).

Residues 1–14 are Cytoplasmic-facing; sequence MKLTKAVFRFRRTN. Residues 15 to 35 form a helical membrane-spanning segment; that stretch reads LSTLLVITYLVITTLYVWDHF. Residues 36-352 are Vacuolar-facing; it reads RYHFTLPSDY…WFVVWSARSL (317 aa). Residues His149, Asp161, Glu194, Glu219, and His293 each contribute to the Zn(2+) site. Residues 353-373 traverse the membrane as a helical segment; the sequence is FYWNCIILALFPSILAILFLV. Topologically, residues 374–390 are cytoplasmic; it reads AYDMQLLKFNFWDAMLR. A helical transmembrane segment spans residues 391-411; it reads LPVSVCLAYFCVKLFQVLVGQ. Over 412–420 the chain is Vacuolar; that stretch reads LNPYVFSRD. Residues 421–441 form a helical membrane-spanning segment; sequence YVSPILAEASMFIFMNYVILS. The Cytoplasmic segment spans residues 442–451; it reads SWERLRPLRD. The chain crosses the membrane as a helical span at residues 452 to 472; it reads FKTVALVEVSMVLWIYLISVT. The Vacuolar portion of the chain corresponds to 473-487; it reads RWLRDSDYTATGLYP. The helical transmembrane segment at 488-508 threads the bilayer; it reads FTIGYTFVSIGAIIGVFCATF. At 509–647 the chain is on the cytoplasmic side; it reads KAKLNPEDDS…SILNYDWSIQ (139 aa). The disordered stretch occupies residues 534 to 585; sequence MQHQYQQHSQKHSNQHSPHHSTHHSAQHSVHHSPRQSIHQVPSSEQRQRDAS. The span at 542–567 shows a compositional bias: basic residues; that stretch reads SQKHSNQHSPHHSTHHSAQHSVHHSP. A compositionally biased stretch (polar residues) spans 568–578; sequence RQSIHQVPSSE. The helical transmembrane segment at 648 to 668 threads the bilayer; the sequence is FMVVTPWVTYFTWICLDLIMG. The Vacuolar portion of the chain corresponds to 669-681; the sequence is AMNQTIQESAKGT. An N-linked (GlcNAc...) asparagine glycan is attached at Asn671. The chain crosses the membrane as a helical span at residues 682-702; that stretch reads TFVTHMALIGSLLLSLPMLPF. Topologically, residues 703–708 are cytoplasmic; sequence TYKLHS. Residues 709–729 traverse the membrane as a helical segment; the sequence is FAGMLFLLLAVTTAVWTIVAP. Over 730–1011 the chain is Vacuolar; sequence PFTESSPLKL…MVSVTKYVEL (282 aa). N-linked (GlcNAc...) asparagine glycosylation is found at Asn751, Asn825, and Asn854.

It belongs to the peptidase M28 family. Requires Zn(2+) as cofactor.

Its subcellular location is the vacuole membrane. May be involved in vacuolar sorting and osmoregulation. This is Vacuolar membrane protease from Eremothecium gossypii (strain ATCC 10895 / CBS 109.51 / FGSC 9923 / NRRL Y-1056) (Yeast).